We begin with the raw amino-acid sequence, 519 residues long: Cytochrome P450 72C1 (519 aa).

The chain crosses the membrane as a helical span at residues 10-30; that stretch reads VFLIGFLILILNWVWRAVNWV. Residue cysteine 467 coordinates heme.

It belongs to the cytochrome P450 family. Heme is required as a cofactor. Expressed in hypocotyls, roots, cotyledons, stamens and silique junctions.

The protein localises to the membrane. Its function is as follows. Atypical cytochrome P450 involved in brassinosteroids (BRs) inactivation and regulation of BRs homeostasis. Does not possess carbon 26 hydroxylase activity and may inactivate BRs by hydroxylation of carbons other than C-26. Acts in association with CYP734A1 to inactivate BRs and modulate photomorphogenesis. The sequence is that of Cytochrome P450 72C1 (CYP72C1) from Arabidopsis thaliana (Mouse-ear cress).